The following is a 1224-amino-acid chain: uncharacterized protein (1224 aa).

Disordered regions lie at residues 1–67 (MNQD…SSSI), 111–151 (QQSH…PPPL), 193–270 (QTEL…DPNI), 316–416 (DYNN…TVKK), 430–957 (SDSG…QEEK), and 1078–1167 (SFLP…TSHV). Residues 10–48 (SFHSNNNSNSNHHHSYNNSINSGSSSSGSNNSSNNNSFN) show a composition bias toward low complexity. Acidic residues predominate over residues 49–58 (DEIEGGEIQE). 3 stretches are compositionally biased toward low complexity: residues 126–140 (SSSS…SSSS), 193–212 (QTEL…SSPP), and 228–241 (SAPT…SVSS). Residues 242 to 255 (LTQPQKPKSVQYSQ) show a composition bias toward polar residues. Residues 260 to 270 (EIREEKVDPNI) are compositionally biased toward basic and acidic residues. The segment covering 316–338 (DYNNSNSNNSNNNNNNNNSITEN) has biased composition (low complexity). The span at 341–353 (DKMINNQPSSTNS) shows a compositional bias: polar residues. 2 stretches are compositionally biased toward low complexity: residues 379-413 (TTTT…TTPT) and 430-450 (SDSG…TSTP). 2 stretches are compositionally biased toward basic and acidic residues: residues 451–585 (KSKD…DKKK) and 630–646 (EIDK…KVES). The segment covering 662–719 (TTTTTTSTSSSSSLPSLSSSSSSLPLPSSSSSSSSSSSSSSSSSSSSSSSSSSSTTST) has biased composition (low complexity). A compositionally biased stretch (pro residues) spans 727 to 750 (PPPPPQQPPPPPPQQPPPPPPPIN). Positions 755 to 892 (SEHDKKIIEK…SDRDRDRKDS (138 aa)) are enriched in basic and acidic residues. The segment covering 893-933 (NSNNNSNNNNNNNNNNNNNNNNNNNNKKDNNNNNNNNNNNN) has biased composition (low complexity). Residues 948–957 (TPKKTKQEEK) show a composition bias toward basic and acidic residues. Residues 950-991 (KKTKQEEKLIRSQIDQIKEDAKDLKKLAKELQSKNQNECLEM) are a coiled coil. Low complexity-rich tracts occupy residues 1078–1108 (SFLP…TAPL) and 1114–1165 (NPSE…PNTS).

This is an uncharacterized protein from Dictyostelium discoideum (Social amoeba).